The primary structure comprises 126 residues: Transcription antitermination protein NusB (126 aa).

This sequence belongs to the NusB family.

Functionally, involved in transcription antitermination. Required for transcription of ribosomal RNA (rRNA) genes. Binds specifically to the boxA antiterminator sequence of the ribosomal RNA (rrn) operons. The sequence is that of Transcription antitermination protein NusB from Oceanobacillus iheyensis (strain DSM 14371 / CIP 107618 / JCM 11309 / KCTC 3954 / HTE831).